A 363-amino-acid chain; its full sequence is GTPase Obg (363 aa).

The 159-residue stretch at 1–159 folds into the Obg domain; the sequence is MKFLDEAKVY…KTIWLRLKLI (159 aa). In terms of domain architecture, OBG-type G spans 160–327; sequence ADAGLVGLPN…VLRALRDIIV (168 aa). GTP-binding positions include 166–173, 191–195, 212–215, 279–282, and 308–310; these read GLPNAGKS, FTTLH, DIPG, SQID, and SAV. 2 residues coordinate Mg(2+): serine 173 and threonine 193. The tract at residues 332–363 is disordered; that stretch reads EEKPAKAPKLRHRDMIVSEENNQGEDGADDQP. Positions 353 to 363 are enriched in acidic residues; the sequence is NQGEDGADDQP.

It belongs to the TRAFAC class OBG-HflX-like GTPase superfamily. OBG GTPase family. As to quaternary structure, monomer. Mg(2+) serves as cofactor.

Its subcellular location is the cytoplasm. An essential GTPase which binds GTP, GDP and possibly (p)ppGpp with moderate affinity, with high nucleotide exchange rates and a fairly low GTP hydrolysis rate. Plays a role in control of the cell cycle, stress response, ribosome biogenesis and in those bacteria that undergo differentiation, in morphogenesis control. This is GTPase Obg from Rhizobium etli (strain ATCC 51251 / DSM 11541 / JCM 21823 / NBRC 15573 / CFN 42).